A 164-amino-acid chain; its full sequence is Transcription elongation factor GreA (164 aa).

The stretch at 50–76 forms a coiled coil; that stretch reads YHAAREEQGQQEARIRQLQELLNNAKV.

This sequence belongs to the GreA/GreB family.

In terms of biological role, necessary for efficient RNA polymerase transcription elongation past template-encoded arresting sites. The arresting sites in DNA have the property of trapping a certain fraction of elongating RNA polymerases that pass through, resulting in locked ternary complexes. Cleavage of the nascent transcript by cleavage factors such as GreA or GreB allows the resumption of elongation from the new 3'terminus. GreA releases sequences of 2 to 3 nucleotides. In Mycolicibacterium smegmatis (strain ATCC 700084 / mc(2)155) (Mycobacterium smegmatis), this protein is Transcription elongation factor GreA.